The following is a 1080-amino-acid chain: Origin recognition complex subunit 3 (1080 aa).

3 disordered regions span residues 92-112 (YGISKGDDDDDGDYVGGDDSS), 566-701 (TIKL…PKRI), and 869-902 (IKNEIKQQQQQQQQQQQQQQQQQHQQQQKIENEQ). Basic and acidic residues predominate over residues 651-661 (IKSDLECNDND). Positions 662 to 671 (KDNDDNDNDI) are enriched in acidic residues. 2 stretches are compositionally biased toward low complexity: residues 672–688 (NENNNNINNNNNNNSNN) and 875–896 (QQQQQQQQQQQQQQQQQHQQQQ).

The protein belongs to the ORC3 family. In terms of assembly, ORC is composed of six subunits.

The protein resides in the nucleus. In terms of biological role, component of the origin recognition complex (ORC) that binds origins of replication. DNA-binding is ATP-dependent, however specific DNA sequences that define origins of replication have not been identified so far. ORC is required to assemble the pre-replication complex necessary to initiate DNA replication. The sequence is that of Origin recognition complex subunit 3 (orcC) from Dictyostelium discoideum (Social amoeba).